The primary structure comprises 488 residues: GTPase Der (488 aa).

Positions 3 to 166 (PVVALVGRPN…YALAPYAEAL (164 aa)) constitute an EngA-type G 1 domain. GTP contacts are provided by residues 9 to 16 (GRPNVGKS), 56 to 60 (DTGGI), and 118 to 121 (NKVD). Residues 168 to 191 (LNRDGDEDEDEEEREYSEEEAEAE) are disordered. A compositionally biased stretch (acidic residues) spans 172–189 (GDEDEDEEEREYSEEEAE). One can recognise an EngA-type G 2 domain in the interval 200–373 (IKMAIIGKPN…SVQEAYDSAT (174 aa)). GTP is bound by residues 206-213 (GKPNVGKS), 253-257 (DTAGV), and 318-321 (NKWD). Residues 374 to 458 (RRVSTSMLTR…PIQIRFQDSA (85 aa)) form the KH-like domain.

Belongs to the TRAFAC class TrmE-Era-EngA-EngB-Septin-like GTPase superfamily. EngA (Der) GTPase family. As to quaternary structure, associates with the 50S ribosomal subunit.

In terms of biological role, GTPase that plays an essential role in the late steps of ribosome biogenesis. The protein is GTPase Der of Shewanella sediminis (strain HAW-EB3).